The primary structure comprises 145 residues: D-aminoacyl-tRNA deacylase (145 aa).

The Gly-cisPro motif, important for rejection of L-amino acids signature appears at 137-138; it reads GP.

The protein belongs to the DTD family. Homodimer.

The protein resides in the cytoplasm. It catalyses the reaction glycyl-tRNA(Ala) + H2O = tRNA(Ala) + glycine + H(+). The enzyme catalyses a D-aminoacyl-tRNA + H2O = a tRNA + a D-alpha-amino acid + H(+). An aminoacyl-tRNA editing enzyme that deacylates mischarged D-aminoacyl-tRNAs. Also deacylates mischarged glycyl-tRNA(Ala), protecting cells against glycine mischarging by AlaRS. Acts via tRNA-based rather than protein-based catalysis; rejects L-amino acids rather than detecting D-amino acids in the active site. By recycling D-aminoacyl-tRNA to D-amino acids and free tRNA molecules, this enzyme counteracts the toxicity associated with the formation of D-aminoacyl-tRNA entities in vivo and helps enforce protein L-homochirality. The protein is D-aminoacyl-tRNA deacylase of Pseudomonas putida (strain ATCC 47054 / DSM 6125 / CFBP 8728 / NCIMB 11950 / KT2440).